Reading from the N-terminus, the 207-residue chain is Uracil phosphoribosyltransferase (207 aa).

Residues Arg-77, Arg-102, and 129–137 (DPMVATGGS) each bind 5-phospho-alpha-D-ribose 1-diphosphate. Uracil contacts are provided by residues Ile-192 and 197–199 (GDA). A 5-phospho-alpha-D-ribose 1-diphosphate-binding site is contributed by Asp-198.

It belongs to the UPRTase family. It depends on Mg(2+) as a cofactor.

It carries out the reaction UMP + diphosphate = 5-phospho-alpha-D-ribose 1-diphosphate + uracil. The protein operates within pyrimidine metabolism; UMP biosynthesis via salvage pathway; UMP from uracil: step 1/1. Its activity is regulated as follows. Allosterically activated by GTP. In terms of biological role, catalyzes the conversion of uracil and 5-phospho-alpha-D-ribose 1-diphosphate (PRPP) to UMP and diphosphate. This is Uracil phosphoribosyltransferase from Mycobacterium bovis (strain ATCC BAA-935 / AF2122/97).